We begin with the raw amino-acid sequence, 642 residues long: Threonine--tRNA ligase (642 aa).

The region spanning Met-1–Thr-61 is the TGS domain. The catalytic stretch occupies residues Asp-243–Pro-536. Zn(2+)-binding residues include Cys-336, His-387, and His-513.

The protein belongs to the class-II aminoacyl-tRNA synthetase family. Homodimer. Requires Zn(2+) as cofactor.

The protein resides in the cytoplasm. The enzyme catalyses tRNA(Thr) + L-threonine + ATP = L-threonyl-tRNA(Thr) + AMP + diphosphate + H(+). In terms of biological role, catalyzes the attachment of threonine to tRNA(Thr) in a two-step reaction: L-threonine is first activated by ATP to form Thr-AMP and then transferred to the acceptor end of tRNA(Thr). Also edits incorrectly charged L-seryl-tRNA(Thr). This Granulibacter bethesdensis (strain ATCC BAA-1260 / CGDNIH1) protein is Threonine--tRNA ligase.